A 103-amino-acid polypeptide reads, in one-letter code: Methane monooxygenase component D (103 aa).

As to quaternary structure, the soluble methane monooxygenase (sMMO) consists of four components A/MMOH (composed of alpha/MmoX, beta/MmoY and gamma/MmoZ), B/MMOB (MmoB), C/MMOR (MmoC) and D/MMOD (MmoD).

This is Methane monooxygenase component D (mmoD) from Methylococcus capsulatus (strain ATCC 33009 / NCIMB 11132 / Bath).